Consider the following 763-residue polypeptide: 5-methyltetrahydropteroyltriglutamate--homocysteine methyltransferase (763 aa).

5-methyltetrahydropteroyltri-L-glutamate contacts are provided by residues 16-19 (RELK) and Lys-114. L-homocysteine-binding positions include 438–440 (IGS) and Glu-491. L-methionine is bound by residues 438–440 (IGS) and Glu-491. 5-methyltetrahydropteroyltri-L-glutamate is bound by residues 522–523 (RC) and Trp-568. Asp-606 lines the L-homocysteine pocket. Asp-606 is a binding site for L-methionine. 5-methyltetrahydropteroyltri-L-glutamate is bound at residue Glu-612. His-648, Cys-650, and Glu-672 together coordinate Zn(2+). The Proton donor role is filled by His-701. Cys-733 serves as a coordination point for Zn(2+).

It belongs to the vitamin-B12 independent methionine synthase family. The cofactor is Zn(2+).

It catalyses the reaction 5-methyltetrahydropteroyltri-L-glutamate + L-homocysteine = tetrahydropteroyltri-L-glutamate + L-methionine. It functions in the pathway amino-acid biosynthesis; L-methionine biosynthesis via de novo pathway; L-methionine from L-homocysteine (MetE route): step 1/1. Its function is as follows. Catalyzes the transfer of a methyl group from 5-methyltetrahydrofolate to homocysteine resulting in methionine formation. The polypeptide is 5-methyltetrahydropteroyltriglutamate--homocysteine methyltransferase (Parvibaculum lavamentivorans (strain DS-1 / DSM 13023 / NCIMB 13966)).